We begin with the raw amino-acid sequence, 67 residues long: MMPGPFELIVILVIVLLLFGGKRLKNVGSDLGNAIKGFKKSMQKEPADQINTKDNIVEAKTTKESTK.

The chain crosses the membrane as a helical span at residues 1–21 (MMPGPFELIVILVIVLLLFGG).

The protein belongs to the TatA/E family. The Tat system comprises two distinct complexes: a TatABC complex, containing multiple copies of TatA, TatB and TatC subunits, and a separate TatA complex, containing only TatA subunits. Substrates initially bind to the TatABC complex, which probably triggers association of the separate TatA complex to form the active translocon.

It localises to the cell inner membrane. Its function is as follows. Part of the twin-arginine translocation (Tat) system that transports large folded proteins containing a characteristic twin-arginine motif in their signal peptide across membranes. TatA could form the protein-conducting channel of the Tat system. The protein is Sec-independent protein translocase protein TatA of Ruthia magnifica subsp. Calyptogena magnifica.